Reading from the N-terminus, the 706-residue chain is Elongation factor G (706 aa).

One can recognise a tr-type G domain in the interval 8-290 (NRYRNIGICA…AVIDYLPAPT (283 aa)). GTP is bound by residues 17–24 (AHVDAGKT), 88–92 (DTPGH), and 142–145 (NKMD).

It belongs to the TRAFAC class translation factor GTPase superfamily. Classic translation factor GTPase family. EF-G/EF-2 subfamily.

It is found in the cytoplasm. Catalyzes the GTP-dependent ribosomal translocation step during translation elongation. During this step, the ribosome changes from the pre-translocational (PRE) to the post-translocational (POST) state as the newly formed A-site-bound peptidyl-tRNA and P-site-bound deacylated tRNA move to the P and E sites, respectively. Catalyzes the coordinated movement of the two tRNA molecules, the mRNA and conformational changes in the ribosome. The protein is Elongation factor G of Stutzerimonas stutzeri (strain A1501) (Pseudomonas stutzeri).